The primary structure comprises 220 residues: Adenylate kinase (220 aa).

10–15 is an ATP binding site; it reads GAGKGT. An NMP region spans residues 30-59; it reads STGDMLRAAVKNCTPLGLKAKEIMDAGGLV. AMP is bound by residues T31, R36, 57–59, 85–88, and Q92; these read GLV and GFPR. An LID region spans residues 126-163; it reads GRRTCPSCGKGFHVLFAPPRKAGVCDFCGADLVQRGDD. R127 lines the ATP pocket. Residues C130, C133, C150, and C153 each contribute to the Zn(2+) site. The AMP site is built by R160 and R171. An ATP-binding site is contributed by L199.

Belongs to the adenylate kinase family. As to quaternary structure, monomer.

The protein resides in the cytoplasm. The catalysed reaction is AMP + ATP = 2 ADP. It functions in the pathway purine metabolism; AMP biosynthesis via salvage pathway; AMP from ADP: step 1/1. Catalyzes the reversible transfer of the terminal phosphate group between ATP and AMP. Plays an important role in cellular energy homeostasis and in adenine nucleotide metabolism. The sequence is that of Adenylate kinase from Pelobacter propionicus (strain DSM 2379 / NBRC 103807 / OttBd1).